The chain runs to 413 residues: Transposon Ty4-H Gag polyprotein (413 aa).

The stretch at 39-115 forms a coiled coil; the sequence is RKVSIKDEQV…IQLLETNENN (77 aa). The disordered stretch occupies residues 380 to 413; that stretch reads RQQQLKSSAKRTKVLEQDTKKVKQSVQQQKTGNY. Residues 403–413 show a composition bias toward low complexity; sequence QSVQQQKTGNY.

In terms of biological role, capsid protein (CA) is the structural component of the virus-like particle (VLP), forming the shell that encapsulates the retrotransposons dimeric RNA genome. In Saccharomyces cerevisiae (strain ATCC 204508 / S288c) (Baker's yeast), this protein is Transposon Ty4-H Gag polyprotein (TY4A-H).